The chain runs to 595 residues: Alpha-1,3-galactosidase B (595 aa).

The first 22 residues, 1 to 22 (MKTILLFALSLLLSLSVSDVCA), serve as a signal peptide directing secretion. 3 PbH1 repeats span residues 432–454 (TPEVLFAGNTIRNNRARGTLFST), 455–477 (PKKTVVEDNLFDHTSGTAILLCG), and 488–541 (CRDV…VIED).

The protein belongs to the glycosyl hydrolase 110 family. B subfamily.

The enzyme catalyses Hydrolysis of terminal, non-reducing branched (1-&gt;3)-alpha-D-galactosidic residues, producing free D-galactose.. It carries out the reaction Hydrolysis of terminal, non-reducing linear (1-&gt;3)-alpha-D-galactosidic residues, producing free D-galactose.. The catalysed reaction is Hydrolysis of terminal, non-reducing alpha-D-galactose residues in alpha-D-galactosides, including galactose oligosaccharides, galactomannans and galactolipids.. Its function is as follows. Alpha-galactosidase. Removes both branched alpha-1,3-linked galactose residues of blood group B antigens and linear alpha-1,3-linked galactose structures. This Bacteroides fragilis (strain YCH46) protein is Alpha-1,3-galactosidase B (glaB).